Reading from the N-terminus, the 232-residue chain is Phosphoglycolate phosphatase (232 aa).

The active-site Nucleophile is Asp-8. Positions 8 and 10 each coordinate Mg(2+). Lys-156 is a binding site for substrate. Positions 179 and 183 each coordinate Mg(2+).

It belongs to the archaeal SPP-like hydrolase family. Mg(2+) serves as cofactor.

It catalyses the reaction 2-phosphoglycolate + H2O = glycolate + phosphate. Functionally, catalyzes the dephosphorylation of 2-phosphoglycolate. The sequence is that of Phosphoglycolate phosphatase from Methanopyrus kandleri (strain AV19 / DSM 6324 / JCM 9639 / NBRC 100938).